The sequence spans 224 residues: MADEQEIMCKLESIKEIRNKTLQMEKIKARLKAEFEALESEERHLKEYKQEMDLLLQEKMAHVEELRLIHADINVMENTIKQSENDLNKLLESTRRLHDEYKPLKEHVDALRMTLGLQRLPDLCEEEEKLSLDYFEKQKAEWQTEPQEPPIPESLAAAAAAAQQLQVARKQDTRQTATFRQQPPPMKACLSCHQQIHRNAPICPLCKAKSRSRNPKKPKRKQDE.

A coiled-coil region spans residues 11 to 104; it reads LESIKEIRNK…RRLHDEYKPL (94 aa). Residues 189–206 form a C4H2-type zinc finger; it reads CLSCHQQIHRNAPICPLC.

In terms of tissue distribution, expressed in fetal tissues, including in brain, intestine, lung, kidney and muscle. Isoform 1 is expressed in numerous fetal brain regions. Isoform 3 is highly expressed in numerous fetal brain regions and spinal cord.

It is found in the cytoplasm. Its subcellular location is the nucleus. The protein resides in the postsynaptic cell membrane. Functionally, plays a role in interneurons differentiation. Involved in neuronal development and in neuromuscular junction formation. The protein is Zinc finger C4H2 domain-containing protein (ZC4H2) of Homo sapiens (Human).